The chain runs to 413 residues: Enhanced ethylene response protein 5 (413 aa).

One can recognise a PCI domain in the interval 216-402; the sequence is VTYMYYTGRL…KVVVLSKQDP (187 aa).

In terms of assembly, interacts with EIN2 (via C-terminus). May also interact weakly with CSN8. Interacts with DSS1(V), AMPD, SAC3A, SAC3B and At5g61290 (AC Q9FLK4). Interacts with UCH1 and UCH2. Interacts with NUP1, anchoring the TREX-2 complex on the nuclear pore complex. In terms of tissue distribution, expressed at low levels in roots, leaves, stems and shoots. Detected in seedlings, roots, leaves and anthers.

The protein localises to the nucleus. Functionally, involved in the regulation of ethylene response. Probable TREX-2 component required for nuclear RNA export. The TREX-2 complex (transcription and export complex 2) functions in docking export-competent ribonucleoprotein particles (mRNPs) to the nuclear entrance of the nuclear pore complex (nuclear basket). TREX-2 participates in mRNA export and accurate chromatin positioning in the nucleus by tethering genes to the nuclear periphery. This chain is Enhanced ethylene response protein 5, found in Arabidopsis thaliana (Mouse-ear cress).